The sequence spans 301 residues: Probable alpha-L-glutamate ligase 1 (301 aa).

Positions 104–287 (LQLLSRKGIG…VTEPIVEYIE (184 aa)) constitute an ATP-grasp domain. Residues Lys-141, 178 to 179 (EY), Asp-187, and 211 to 213 (RSN) contribute to the ATP site. Asp-248, Glu-260, and Asn-262 together coordinate Mg(2+). Mn(2+) contacts are provided by Asp-248, Glu-260, and Asn-262.

This sequence belongs to the RimK family. Mg(2+) is required as a cofactor. The cofactor is Mn(2+).

The polypeptide is Probable alpha-L-glutamate ligase 1 (Shewanella oneidensis (strain ATCC 700550 / JCM 31522 / CIP 106686 / LMG 19005 / NCIMB 14063 / MR-1)).